The primary structure comprises 884 residues: Protein translocase subunit SecA (884 aa).

Residues Gln88, 106–110, and Asp509 contribute to the ATP site; that span reads GEGKT. The interval 822 to 884 is disordered; the sequence is EQKKLKMSGA…PKKGLFANND (63 aa). Residues 833-842 show a composition bias toward basic and acidic residues; it reads KGGEDLEETK. The Zn(2+) site is built by Cys858, Cys860, Cys869, and His870.

Belongs to the SecA family. Monomer and homodimer. Part of the essential Sec protein translocation apparatus which comprises SecA, SecYEG and auxiliary proteins SecDF-YajC and YidC. It depends on Zn(2+) as a cofactor.

It is found in the cell inner membrane. Its subcellular location is the cytoplasm. It carries out the reaction ATP + H2O + cellular proteinSide 1 = ADP + phosphate + cellular proteinSide 2.. Part of the Sec protein translocase complex. Interacts with the SecYEG preprotein conducting channel. Has a central role in coupling the hydrolysis of ATP to the transfer of proteins into and across the cell membrane, serving as an ATP-driven molecular motor driving the stepwise translocation of polypeptide chains across the membrane. This Campylobacter hominis (strain ATCC BAA-381 / DSM 21671 / CCUG 45161 / LMG 19568 / NCTC 13146 / CH001A) protein is Protein translocase subunit SecA.